A 49-amino-acid chain; its full sequence is DNA-directed RNA polymerase subunit Rpo12 (49 aa).

The Zn(2+) site is built by Cys11, Cys27, and Cys30.

This sequence belongs to the archaeal Rpo12/eukaryotic RPC10 RNA polymerase subunit family. In terms of assembly, part of the RNA polymerase complex. It depends on Zn(2+) as a cofactor.

Its subcellular location is the cytoplasm. The catalysed reaction is RNA(n) + a ribonucleoside 5'-triphosphate = RNA(n+1) + diphosphate. DNA-dependent RNA polymerase (RNAP) catalyzes the transcription of DNA into RNA using the four ribonucleoside triphosphates as substrates. In Pyrococcus furiosus (strain ATCC 43587 / DSM 3638 / JCM 8422 / Vc1), this protein is DNA-directed RNA polymerase subunit Rpo12.